Reading from the N-terminus, the 503-residue chain is Lanosterol 14-alpha demethylase (503 aa).

A helical membrane pass occupies residues 24 to 44; it reads GNLLSTLLIACAFTLSLVYLF. Cys449 is a heme binding site.

This sequence belongs to the cytochrome P450 family. It depends on heme as a cofactor. In terms of processing, ubiquitinated by MARCHF6, leading to proteasomal degradation.

Its subcellular location is the endoplasmic reticulum membrane. It is found in the microsome membrane. The enzyme catalyses a 14alpha-methyl steroid + 3 reduced [NADPH--hemoprotein reductase] + 3 O2 = a Delta(14) steroid + formate + 3 oxidized [NADPH--hemoprotein reductase] + 4 H2O + 4 H(+). It catalyses the reaction lanosterol + 3 reduced [NADPH--hemoprotein reductase] + 3 O2 = 4,4-dimethyl-5alpha-cholesta-8,14,24-trien-3beta-ol + formate + 3 oxidized [NADPH--hemoprotein reductase] + 4 H2O + 4 H(+). It carries out the reaction 24,25-dihydrolanosterol + 3 reduced [NADPH--hemoprotein reductase] + 3 O2 = 4,4-dimethyl-8,14-cholestadien-3beta-ol + formate + 3 oxidized [NADPH--hemoprotein reductase] + 4 H2O + 4 H(+). The catalysed reaction is a 14alpha-methyl steroid + reduced [NADPH--hemoprotein reductase] + O2 = a 14alpha-hydroxymethyl steroid + oxidized [NADPH--hemoprotein reductase] + H2O + H(+). The enzyme catalyses a 14alpha-hydroxymethyl steroid + reduced [NADPH--hemoprotein reductase] + O2 = a 14alpha-formyl steroid + oxidized [NADPH--hemoprotein reductase] + 2 H2O + H(+). It catalyses the reaction a 14alpha-formyl steroid + reduced [NADPH--hemoprotein reductase] + O2 = a Delta(14) steroid + formate + oxidized [NADPH--hemoprotein reductase] + H2O + 2 H(+). It carries out the reaction lanosterol + reduced [NADPH--hemoprotein reductase] + O2 = 32-hydroxylanosterol + oxidized [NADPH--hemoprotein reductase] + H2O + H(+). The catalysed reaction is 32-hydroxylanosterol + reduced [NADPH--hemoprotein reductase] + O2 = 32-oxolanosterol + oxidized [NADPH--hemoprotein reductase] + 2 H2O + H(+). The enzyme catalyses 32-oxolanosterol + reduced [NADPH--hemoprotein reductase] + O2 = 4,4-dimethyl-5alpha-cholesta-8,14,24-trien-3beta-ol + formate + oxidized [NADPH--hemoprotein reductase] + H2O + 2 H(+). It catalyses the reaction 24,25-dihydrolanosterol + reduced [NADPH--hemoprotein reductase] + O2 = 32-hydroxy-24,25-dihydrolanosterol + oxidized [NADPH--hemoprotein reductase] + H2O + H(+). It carries out the reaction 32-hydroxy-24,25-dihydrolanosterol + reduced [NADPH--hemoprotein reductase] + O2 = 32-oxo-24,25-dihydrolanosterol + oxidized [NADPH--hemoprotein reductase] + 2 H2O + H(+). The catalysed reaction is 32-oxo-24,25-dihydrolanosterol + reduced [NADPH--hemoprotein reductase] + O2 = 4,4-dimethyl-8,14-cholestadien-3beta-ol + formate + oxidized [NADPH--hemoprotein reductase] + H2O + 2 H(+). It participates in steroid biosynthesis; zymosterol biosynthesis; zymosterol from lanosterol: step 1/6. With respect to regulation, inhibited by azalanstat. Inhibited by azole antifungal agents ketoconazole, itraconazole and fluconazole. Its function is as follows. Sterol 14alpha-demethylase that plays a critical role in the cholesterol biosynthesis pathway, being cholesterol the major sterol component in mammalian membranes as well as a precursor for bile acid and steroid hormone synthesis. Cytochrome P450 monooxygenase that catalyzes the three-step oxidative removal of the 14alpha-methyl group (C-32) of sterols such as lanosterol (lanosta-8,24-dien-3beta-ol) and 24,25-dihydrolanosterol (DHL) in the form of formate, and converts the sterols to 4,4-dimethyl-5alpha-cholesta-8,14,24-trien-3beta-ol and 4,4-dimethyl-8,14-cholestadien-3beta-ol, respectively, which are intermediates of cholesterol biosynthesis. Can also demethylate substrates not intrinsic to mammals, such as eburicol (24-methylene-24,25-dihydrolanosterol), but at a lower rate than DHL. This is Lanosterol 14-alpha demethylase from Rattus norvegicus (Rat).